The chain runs to 311 residues: Putative tenascin-XA (311 aa).

2 disordered regions span residues M1–L47 and L124–S150. 3 consecutive Fibronectin type-III domains span residues P41–A135, R145–D249, and L250–H311.

In terms of tissue distribution, expressed in the adrenal gland.

This chain is Putative tenascin-XA (TNXA), found in Homo sapiens (Human).